Here is a 135-residue protein sequence, read N- to C-terminus: NADH-quinone oxidoreductase subunit A (135 aa).

A run of 3 helical transmembrane segments spans residues 9–29 (YFPILLQAVIAMGLAAGLLTV), 67–87 (VGMLFILFDIEAIFLYPWVVV), and 97–117 (LFGFYEMLTFVILILSGFFYI).

This sequence belongs to the complex I subunit 3 family. NDH-1 is composed of 14 different subunits. Subunits NuoA, H, J, K, L, M, N constitute the membrane sector of the complex.

The protein resides in the cell inner membrane. The catalysed reaction is a quinone + NADH + 5 H(+)(in) = a quinol + NAD(+) + 4 H(+)(out). Its function is as follows. NDH-1 shuttles electrons from NADH, via FMN and iron-sulfur (Fe-S) centers, to quinones in the respiratory chain. The immediate electron acceptor for the enzyme in this species is believed to be ubiquinone. Couples the redox reaction to proton translocation (for every two electrons transferred, four hydrogen ions are translocated across the cytoplasmic membrane), and thus conserves the redox energy in a proton gradient. This is NADH-quinone oxidoreductase subunit A from Solibacter usitatus (strain Ellin6076).